The following is a 270-amino-acid chain: Dehydrodolichyl diphosphate synthase (270 aa).

It belongs to the UPP synthase family.

It is found in the endoplasmic reticulum membrane. Its pathway is protein modification; protein glycosylation. Cis-prenyl transferase that adds multiple copies of isopentenyl pyrophosphate (IPP) to farnesyl pyrophosphate (FPP) to produce dehydrodolichyl diphosphate (Dedol-PP). The chain is Dehydrodolichyl diphosphate synthase (RER2) from Encephalitozoon cuniculi (strain GB-M1) (Microsporidian parasite).